A 249-amino-acid polypeptide reads, in one-letter code: tRNA (guanine-N(1)-)-methyltransferase (249 aa).

S-adenosyl-L-methionine is bound by residues glycine 116 and 136–141 (IGDYIL).

The protein belongs to the RNA methyltransferase TrmD family. In terms of assembly, homodimer.

The protein localises to the cytoplasm. It catalyses the reaction guanosine(37) in tRNA + S-adenosyl-L-methionine = N(1)-methylguanosine(37) in tRNA + S-adenosyl-L-homocysteine + H(+). Specifically methylates guanosine-37 in various tRNAs. This chain is tRNA (guanine-N(1)-)-methyltransferase, found in Zymomonas mobilis subsp. mobilis (strain ATCC 31821 / ZM4 / CP4).